We begin with the raw amino-acid sequence, 697 residues long: MSSSHTVTVSMDVEAGQKNKDKKGISQDLILAYKTLGVVFGGLVTSPLYVYPSMNLTNPTEEDYLGIYSIMFWTLTLIGVVKYICIALNADDHGEGGTFAMYSLLCQHANIGILPSKKIYTEEENLISNQPVVAGRPGRLRRFIESSIIARRLLLLTAILGMCMLIGDGILTPAISVLSAIDGLRGPFPSVSKPAVEGLSAAILVGLFLLQKYGTSKVSFMFSPIMAAWTFATPVIGVYSIWRYYPGIFKAMSPHYIVRFFMTNQTRGWQLLGGTVLCITGAEAMFADLGHFSKRSIQIAFMSSIYPSLVLTYAGQTAYLINNVDDFSDGFYKFVPRPVYWPMFIIATLAAIVASQSLISATFSVIKQSVVLDYFPRVKVVHTSKDKEGEVYSPETNYMLMLLCVGVILGFGDGKDIGNAFGVVVILVMLITTILLTLVMLIIWGTHVVLVALYLVPFLLLEATYVSAVCTKILRGGWVPFAVSVALAAVMFGWYYGRQRKTEYEAANKVTLERLGELLSGPGLRRVPGLCFFYSNRQDGGWLTPVLAHYIRNMRSLHEVTVFLTLRYLLVAKVDGKDRVQAVRRLGPAGVYGCTIQYGYADAIDFEEDDIAGQVVGALRERVVDGEEEGERVEAARAAGVVHVRGKMRFHVGKDTRLFDRVLLGFYELLHGACRSALPALGIPLQQRVEIGMLYKA.

Residues 1-29 (MSSSHTVTVSMDVEAGQKNKDKKGISQDL) are Cytoplasmic-facing. The chain crosses the membrane as a helical span at residues 30–50 (ILAYKTLGVVFGGLVTSPLYV). At 51-66 (YPSMNLTNPTEEDYLG) the chain is on the extracellular side. An N-linked (GlcNAc...) asparagine glycan is attached at N55. The chain crosses the membrane as a helical span at residues 67–87 (IYSIMFWTLTLIGVVKYICIA). The Cytoplasmic portion of the chain corresponds to 88 to 152 (LNADDHGEGG…FIESSIIARR (65 aa)). A helical transmembrane segment spans residues 153–173 (LLLLTAILGMCMLIGDGILTP). The Extracellular segment spans residues 174-189 (AISVLSAIDGLRGPFP). A helical membrane pass occupies residues 190-210 (SVSKPAVEGLSAAILVGLFLL). Residues 211–217 (QKYGTSK) are Cytoplasmic-facing. A helical membrane pass occupies residues 218–238 (VSFMFSPIMAAWTFATPVIGV). Topologically, residues 239-271 (YSIWRYYPGIFKAMSPHYIVRFFMTNQTRGWQL) are extracellular. An N-linked (GlcNAc...) asparagine glycan is attached at N264. The chain crosses the membrane as a helical span at residues 272 to 292 (LGGTVLCITGAEAMFADLGHF). Over 293–300 (SKRSIQIA) the chain is Cytoplasmic. A helical transmembrane segment spans residues 301–321 (FMSSIYPSLVLTYAGQTAYLI). Residues 322–338 (NNVDDFSDGFYKFVPRP) lie on the Extracellular side of the membrane. Residues 339–359 (VYWPMFIIATLAAIVASQSLI) traverse the membrane as a helical segment. The Cytoplasmic portion of the chain corresponds to 360 to 390 (SATFSVIKQSVVLDYFPRVKVVHTSKDKEGE). The chain crosses the membrane as a helical span at residues 391–411 (VYSPETNYMLMLLCVGVILGF). The Extracellular portion of the chain corresponds to 412-422 (GDGKDIGNAFG). Residues 423-443 (VVVILVMLITTILLTLVMLII) traverse the membrane as a helical segment. The Cytoplasmic segment spans residues 444–447 (WGTH). Residues 448 to 468 (VVLVALYLVPFLLLEATYVSA) traverse the membrane as a helical segment. Over 469-475 (VCTKILR) the chain is Extracellular. The chain crosses the membrane as a helical span at residues 476–496 (GGWVPFAVSVALAAVMFGWYY). Residues 497–697 (GRQRKTEYEA…RVEIGMLYKA (201 aa)) are Cytoplasmic-facing.

It belongs to the HAK/KUP transporter (TC 2.A.72.3) family.

Its subcellular location is the membrane. Functionally, high-affinity potassium transporter. The chain is Probable potassium transporter 4 (HAK4) from Oryza sativa subsp. japonica (Rice).